The chain runs to 443 residues: COP9 signalosome complex subunit 2 (443 aa).

The PCI domain maps to 254–416 (AHTDFFEAFK…QLLELDHQKR (163 aa)).

Belongs to the CSN2 family. Component of the CSN complex, probably composed of cops1, cops2, cops3, cops4, cops5, cops6, cops7, cops8 and cops9.

It is found in the cytoplasm. The protein localises to the nucleus. Essential component of the COP9 signalosome complex (CSN), a complex involved in various cellular and developmental processes. The CSN complex is an essential regulator of the ubiquitin (Ubl) conjugation pathway by mediating the deneddylation of the cullin subunits of E3 ligase complexes, leading to modify the Ubl ligase activity. This is COP9 signalosome complex subunit 2 (cops2) from Danio rerio (Zebrafish).